We begin with the raw amino-acid sequence, 255 residues long: Large ribosomal subunit protein uL4 (255 aa).

This sequence belongs to the universal ribosomal protein uL4 family. As to quaternary structure, part of the 50S ribosomal subunit.

Functionally, one of the primary rRNA binding proteins, this protein initially binds near the 5'-end of the 23S rRNA. It is important during the early stages of 50S assembly. It makes multiple contacts with different domains of the 23S rRNA in the assembled 50S subunit and ribosome. Its function is as follows. Forms part of the polypeptide exit tunnel. The polypeptide is Large ribosomal subunit protein uL4 (Pyrococcus abyssi (strain GE5 / Orsay)).